A 92-amino-acid chain; its full sequence is Large ribosomal subunit protein eL43A (92 aa).

The C4-type zinc-finger motif lies at 39–60 (CSFCGKKTVKRGAAGIWTCSCC). A Phosphoserine modification is found at Ser40.

It belongs to the eukaryotic ribosomal protein eL43 family. Component of the large ribosomal subunit (LSU). Mature yeast ribosomes consist of a small (40S) and a large (60S) subunit. The 40S small subunit contains 1 molecule of ribosomal RNA (18S rRNA) and 33 different proteins (encoded by 57 genes). The large 60S subunit contains 3 rRNA molecules (25S, 5.8S and 5S rRNA) and 46 different proteins (encoded by 81 genes).

Its subcellular location is the cytoplasm. Functionally, component of the ribosome, a large ribonucleoprotein complex responsible for the synthesis of proteins in the cell. The small ribosomal subunit (SSU) binds messenger RNAs (mRNAs) and translates the encoded message by selecting cognate aminoacyl-transfer RNA (tRNA) molecules. The large subunit (LSU) contains the ribosomal catalytic site termed the peptidyl transferase center (PTC), which catalyzes the formation of peptide bonds, thereby polymerizing the amino acids delivered by tRNAs into a polypeptide chain. The nascent polypeptides leave the ribosome through a tunnel in the LSU and interact with protein factors that function in enzymatic processing, targeting, and the membrane insertion of nascent chains at the exit of the ribosomal tunnel. This chain is Large ribosomal subunit protein eL43A, found in Saccharomyces cerevisiae (strain ATCC 204508 / S288c) (Baker's yeast).